We begin with the raw amino-acid sequence, 292 residues long: Elongation factor Ts (292 aa).

Residues 80–83 (TDFV) are involved in Mg(2+) ion dislocation from EF-Tu.

It belongs to the EF-Ts family.

It is found in the cytoplasm. Functionally, associates with the EF-Tu.GDP complex and induces the exchange of GDP to GTP. It remains bound to the aminoacyl-tRNA.EF-Tu.GTP complex up to the GTP hydrolysis stage on the ribosome. This chain is Elongation factor Ts, found in Ralstonia pickettii (strain 12J).